Here is a 139-residue protein sequence, read N- to C-terminus: Ubiquitin-conjugating enzyme spm2 (139 aa).

Residues 5-139 (PRNFKLLEEL…PQPPEGSTFF (135 aa)) form the UBC core domain.

This sequence belongs to the ubiquitin-conjugating enzyme family. In terms of assembly, heterodimer with ubc13.

In terms of biological role, has a role in the DNA error-free postreplication repair (PRR) pathway. Lacks catalytic activity by itself. The ubc13/spm2 heterodimer catalyzes the synthesis of non-canonical poly-ubiquitin chains that are linked through 'Lys-63'. This is Ubiquitin-conjugating enzyme spm2 (spm2) from Schizosaccharomyces pombe (strain 972 / ATCC 24843) (Fission yeast).